Consider the following 227-residue polypeptide: Uridylate kinase (227 aa).

9–10 (GS) serves as a coordination point for ATP. Position 44 (glycine 44) interacts with UMP. ATP contacts are provided by glycine 45 and arginine 49. Residues aspartate 66 and 114–120 (TVPGHTT) contribute to the UMP site. ATP contacts are provided by threonine 140, phenylalanine 146, and aspartate 149.

Belongs to the UMP kinase family. In terms of assembly, homohexamer.

Its subcellular location is the cytoplasm. It carries out the reaction UMP + ATP = UDP + ADP. The protein operates within pyrimidine metabolism; CTP biosynthesis via de novo pathway; UDP from UMP (UMPK route): step 1/1. Inhibited by UTP. In terms of biological role, catalyzes the reversible phosphorylation of UMP to UDP. The sequence is that of Uridylate kinase from Natronomonas pharaonis (strain ATCC 35678 / DSM 2160 / CIP 103997 / JCM 8858 / NBRC 14720 / NCIMB 2260 / Gabara) (Halobacterium pharaonis).